The chain runs to 382 residues: Mannitol-1-phosphate 5-dehydrogenase (382 aa).

Position 3–14 (3–14 (ALHFGAGNIGRG)) interacts with NAD(+). Lys-269 carries the post-translational modification N6-acetyllysine.

The protein belongs to the mannitol dehydrogenase family.

It carries out the reaction D-mannitol 1-phosphate + NAD(+) = beta-D-fructose 6-phosphate + NADH + H(+). The sequence is that of Mannitol-1-phosphate 5-dehydrogenase from Escherichia coli (strain K12 / MC4100 / BW2952).